A 756-amino-acid chain; its full sequence is Probable cleavage and polyadenylation specificity factor subunit 2 (756 aa).

2 positions are modified to phosphothreonine: T221 and T226.

It belongs to the metallo-beta-lactamase superfamily. RNA-metabolizing metallo-beta-lactamase-like family. CPSF2/YSH1 subfamily. Component of the cleavage and polyadenylation specificity factor (CPSF) complex, composed of at least Clp, Cpsf73, Cpsf100 and Cpsf160. Interacts with Sym and Cpsf73 forming a core cleavage factor required for both polyadenylated and histone mRNA processing. Interacts with Slbp and Lsm11.

It localises to the nucleus. Functionally, component of the cleavage and polyadenylation specificity factor (CPSF) complex that plays a key role in pre-mRNA 3'-end formation, recognizing the AAUAAA signal sequence and interacting with poly(A) polymerase and other factors to bring about cleavage and poly(A) addition. Required for the cotranscriptional processing of 3'-ends of polyadenylated and histone pre-mRNA. The sequence is that of Probable cleavage and polyadenylation specificity factor subunit 2 (Cpsf100) from Drosophila melanogaster (Fruit fly).